The chain runs to 627 residues: Membrane protein insertase YidC (627 aa).

Transmembrane regions (helical) follow at residues 3–23 (KNTV…SWLN), 376–396 (WGLI…PLAY), 450–470 (LPML…PTTI), 502–522 (FYGN…ILYI), 534–554 (EGMA…LFFF), and 558–578 (ASGL…QYMS).

Belongs to the OXA1/ALB3/YidC family. Type 1 subfamily. Interacts with the Sec translocase complex via SecD. Specifically interacts with transmembrane segments of nascent integral membrane proteins during membrane integration.

Its subcellular location is the cell inner membrane. In terms of biological role, required for the insertion and/or proper folding and/or complex formation of integral membrane proteins into the membrane. Involved in integration of membrane proteins that insert both dependently and independently of the Sec translocase complex, as well as at least some lipoproteins. Aids folding of multispanning membrane proteins. The chain is Membrane protein insertase YidC from Porphyromonas gingivalis (strain ATCC BAA-308 / W83).